Here is a 190-residue protein sequence, read N- to C-terminus: Large ribosomal subunit protein bL9 (190 aa).

Belongs to the bacterial ribosomal protein bL9 family.

Binds to the 23S rRNA. This is Large ribosomal subunit protein bL9 from Methylorubrum populi (strain ATCC BAA-705 / NCIMB 13946 / BJ001) (Methylobacterium populi).